The sequence spans 206 residues: Protein SUE1, mitochondrial (206 aa).

The transit peptide at 1-24 directs the protein to the mitochondrion; that stretch reads MILLKRTKIRGVSVSFVSLQRRTH.

Its subcellular location is the mitochondrion envelope. In terms of biological role, required for degradation of unstable forms of cytochrome c. The sequence is that of Protein SUE1, mitochondrial from Saccharomyces cerevisiae (strain ATCC 204508 / S288c) (Baker's yeast).